A 305-amino-acid polypeptide reads, in one-letter code: Methionyl-tRNA formyltransferase (305 aa).

111–114 (SLLP) is a (6S)-5,6,7,8-tetrahydrofolate binding site.

Belongs to the Fmt family.

The enzyme catalyses L-methionyl-tRNA(fMet) + (6R)-10-formyltetrahydrofolate = N-formyl-L-methionyl-tRNA(fMet) + (6S)-5,6,7,8-tetrahydrofolate + H(+). Functionally, attaches a formyl group to the free amino group of methionyl-tRNA(fMet). The formyl group appears to play a dual role in the initiator identity of N-formylmethionyl-tRNA by promoting its recognition by IF2 and preventing the misappropriation of this tRNA by the elongation apparatus. This Campylobacter jejuni subsp. jejuni serotype O:23/36 (strain 81-176) protein is Methionyl-tRNA formyltransferase.